The chain runs to 163 residues: EF-hand calcium-binding domain-containing protein 11 (163 aa).

EF-hand domains lie at Ser18–Tyr53, Arg91–Lys126, and Leu127–Glu162. 5 residues coordinate Ca(2+): Asp140, Asp142, Asp144, His146, and Asp151.

The sequence is that of EF-hand calcium-binding domain-containing protein 11 (EFCAB11) from Homo sapiens (Human).